Consider the following 525-residue polypeptide: GMP synthase [glutamine-hydrolyzing] (525 aa).

One can recognise a Glutamine amidotransferase type-1 domain in the interval 9-207 (RILILDFGSQ…VQDICGCEAL (199 aa)). The Nucleophile role is filled by C86. Catalysis depends on residues H181 and E183. In terms of domain architecture, GMPS ATP-PPase spans 208–400 (WTPSNIVEDA…LGLPYDMVYR (193 aa)). Position 235–241 (235–241 (SGGVDSS)) interacts with ATP.

In terms of assembly, homodimer.

The catalysed reaction is XMP + L-glutamine + ATP + H2O = GMP + L-glutamate + AMP + diphosphate + 2 H(+). It participates in purine metabolism; GMP biosynthesis; GMP from XMP (L-Gln route): step 1/1. Functionally, catalyzes the synthesis of GMP from XMP. This is GMP synthase [glutamine-hydrolyzing] from Pseudomonas putida (strain W619).